The sequence spans 386 residues: Endonuclease III homolog 2, chloroplastic (386 aa).

A chloroplast-targeting transit peptide spans 1–50 (MILTGAASTFPIVARVLNAMNRRMYAATTLSSAKSISAESLNLRSDSNSE). Positions 44 to 66 (RSDSNSEAAHGASESETRVSLRK) are disordered. One can recognise a HhH domain in the interval 252-278 (YDGDIPRTLEELLSLPGVGPKIAHLVL). The Nucleophile; for N-glycosylase activity role is filled by K272. Positions 347, 354, 357, and 363 each coordinate [4Fe-4S] cluster.

The protein belongs to the Nth/MutY family. It depends on [4Fe-4S] cluster as a cofactor.

The protein localises to the plastid. Its subcellular location is the chloroplast stroma. It localises to the chloroplast nucleoid. The enzyme catalyses 2'-deoxyribonucleotide-(2'-deoxyribose 5'-phosphate)-2'-deoxyribonucleotide-DNA = a 3'-end 2'-deoxyribonucleotide-(2,3-dehydro-2,3-deoxyribose 5'-phosphate)-DNA + a 5'-end 5'-phospho-2'-deoxyribonucleoside-DNA + H(+). In terms of biological role, bifunctional DNA N-glycosylase with associated apurinic/apyrimidinic (AP) lyase function that catalyzes the first step in base excision repair (BER), the primary repair pathway for the repair of oxidative DNA damage. The DNA N-glycosylase activity releases the damaged DNA base from DNA by cleaving the N-glycosidic bond, leaving an AP site. The AP lyase activity cleaves the phosphodiester bond 3' to the AP site by a beta-elimination. Primarily recognizes and repairs oxidative base damage of pyrimidines. The chain is Endonuclease III homolog 2, chloroplastic (NTH2) from Arabidopsis thaliana (Mouse-ear cress).